Consider the following 140-residue polypeptide: Pro-vaccinia growth factor (140 aa).

Residues 1-18 form the signal peptide; it reads MLINYLMLLFAAMIIRSF. The Extracellular segment spans residues 19–100; it reads ADSGNAIETT…SEKPNTTTSY (82 aa). N-linked (GlcNAc...) asparagine; by host glycosylation is present at Asn-34. Residues 41 to 81 enclose the EGF-like domain; it reads AIRLCGPEGDGYCLHGDCIHARDIDGMYCRCSHGYTGIRCQ. 3 cysteine pairs are disulfide-bonded: Cys-45-Cys-58, Cys-53-Cys-69, and Cys-71-Cys-80. N-linked (GlcNAc...) asparagine; by host glycosylation occurs at Asn-95. A helical membrane pass occupies residues 101-121; that stretch reads IPSPGIMLVLVGIIIITCCLL. Residues 122–140 are Cytoplasmic-facing; that stretch reads SVYRFTRRTKLPLQDMVVP.

The protein belongs to the orthopoxvirus OPG019 family. Vaccinia growth factor interacts with host EGFR and promotes EGFR dimerization.

The protein localises to the host membrane. It is found in the secreted. Functionally, stimulates cellular proliferation (hyperplasia)and mobility around infected cells to promote rapid and efficient spread of infection. This effect is beneficial for virus replication in vivo, because poxviruses replicate possibly better in proliferating cells than in quiescent cells. Acts by binding host EGFR, inducing its dimerization, autophosphorylation and leading to activation of several cellular pathways regulating cell proliferation or cell survival. The activation by host EGFR of mitogen activated protein kinases (MAPK) and extracellular-signal regulated kinases (ERK) are essential for the positive effect of vaccinia growth factor on poxvirus virulence in vivo. The chain is Pro-vaccinia growth factor (OPG019) from Homo sapiens (Human).